A 93-amino-acid chain; its full sequence is ATP-dependent Clp protease adapter protein ClpS (93 aa).

It belongs to the ClpS family. In terms of assembly, binds to the N-terminal domain of the chaperone ClpA.

In terms of biological role, involved in the modulation of the specificity of the ClpAP-mediated ATP-dependent protein degradation. In Gloeobacter violaceus (strain ATCC 29082 / PCC 7421), this protein is ATP-dependent Clp protease adapter protein ClpS.